Reading from the N-terminus, the 211-residue chain is Metalloproteinase inhibitor 3 (211 aa).

A signal peptide spans 1 to 23 (MTPWLGLVVLLSCWSLGHWGAEA). Cysteine 24 lines the Zn(2+) pocket. 2 involved in metalloproteinase-binding regions span residues 24–27 (CTCS) and 88–89 (ES). Cystine bridges form between cysteine 24-cysteine 91, cysteine 26-cysteine 118, cysteine 36-cysteine 143, cysteine 145-cysteine 192, cysteine 150-cysteine 155, and cysteine 163-cysteine 184. The NTR domain occupies 24-143 (CTCSPSHPQD…GLNYRYHLGC (120 aa)). Residues 105–188 (TGRVYEGKMY…SKHYACIRQK (84 aa)) form a mediates interaction with EFEMP1 region.

The protein belongs to the protease inhibitor I35 (TIMP) family. Interacts with EFEMP1. Interacts with KDR. As to expression, highest levels are found in kidney, lung and brain followed by ovary and uterus. Low levels are found in bone.

Its subcellular location is the secreted. It localises to the extracellular space. The protein resides in the extracellular matrix. Mediates a variety of processes including matrix regulation and turnover, inflammation, and angiogenesis, through reversible inhibition of zinc protease superfamily enzymes, primarily matrix metalloproteinases (MMPs). Regulates extracellular matrix (ECM) remodeling through inhibition of matrix metalloproteinases (MMP) including MMP-1, MMP-2, MMP-3, MMP-7, MMP-9, MMP-13, MMP-14 and MMP-15. Additionally, modulates the processing of amyloid precursor protein (APP) and apolipoprotein E receptor ApoER2 by inhibiting two alpha-secretases ADAM10 and ADAM17. Functions as a tumor suppressor and a potent inhibitor of angiogenesis. Exerts its anti-angiogenic effect by directly interacting with vascular endothelial growth factor (VEGF) receptor-2/KDR, preventing its binding to the VEGFA ligand. Selectively induces apoptosis in angiogenic endothelial cells through a caspase-independent cell death pathway. Mechanistically, inhibits matrix-induced focal adhesion kinase PTK2 tyrosine phosphorylation and association with paxillin/PXN and disrupts the incorporation of ITGB3, PTK2 and PXN into focal adhesion contacts on the matrix. This is Metalloproteinase inhibitor 3 (Timp3) from Mus musculus (Mouse).